We begin with the raw amino-acid sequence, 1002 residues long: Inversin-B (1002 aa).

ANK repeat units follow at residues 9–39 (SLAS…VIDQ), 43–72 (LGRT…KVNR), 76–105 (SGRT…DCTH), 109–140 (CDIT…QVDA), 144–173 (RKQT…NIGI), 177–209 (EGKI…TESL), 216–246 (EGRT…NVAP), 250–279 (LFRT…SPNI), 284–313 (QGAT…VRDE), 317–346 (EGRT…KLEV), 352–381 (YGGT…QADA), 385–414 (MKHT…KVHL), 418–447 (DGRS…NPDA), 451–480 (EGRT…DPNI), 484–513 (NGRT…FPNQ), and 519–549 (ERYT…SIAA). The D-box 1 motif lies at 486–494 (RTALHWSCN). The IQ 1 domain maps to 551-580 (QDIAAFKIQAVYKGHKVRRAFQERKNLLMK). Basic and acidic residues-rich tracts occupy residues 586–599 (KGAA…ENRQ), 609–621 (KQKD…RQNK), and 643–656 (AEDR…ENLE). 2 disordered regions span residues 586–804 (KGAA…KGRR) and 862–886 (SAKT…SSSA). Composition is skewed to polar residues over residues 670-680 (QRITAQIQSSP) and 687-706 (NSIQ…SSPL). Basic and acidic residues-rich tracts occupy residues 733–763 (HQME…EERK) and 770–796 (QSSD…EGKK). Positions 959–967 (RKQLFQRKN) match the D-box 2 motif. The IQ 2 domain maps to 966–995 (KNHAATVIQKAWRTYWVRKSSCKTRHSRSQ).

Interacts with apc2. Binds calmodulin.

The protein resides in the cytoplasm. Its subcellular location is the cytoskeleton. Required for normal renal development and establishment of left-right axis. Probably acts as a molecular switch between different Wnt signaling pathways. Inhibits the canonical Wnt pathway by targeting cytoplasmic disheveled for degradation by the ubiquitin-proteasome. This suggests that it is required in renal development to oppose the repression of terminal differentiation of tubular epithelial cells by Wnt signaling. Plays a central role in convergent extension movements in gastrulating embryos, a processus regulated by Wnt signaling. The sequence is that of Inversin-B (invs-b) from Xenopus laevis (African clawed frog).